We begin with the raw amino-acid sequence, 208 residues long: MKIVEVKHPLVKHKLGLMRENDISTKRFRELASEVGSLLTYEATADLATEKVTIDGWCGPVEVDQIKGKKITVVPILRAGLGMMEGVLENVPSARISVVGIYRDEETLEPVPYFQKLVSNIEERMALVVDPMLATGGSMIATIDLLKKAGCHSIKVLVLVAAPEGIAALEKAHPDIELYTASIDKGLNEQGYIMPGLGDAGDKIFGTK.

5-phospho-alpha-D-ribose 1-diphosphate is bound by residues Arg-78, Arg-103, and 130-138 (DPMLATGGS). Uracil contacts are provided by residues Ile-193 and 198–200 (GDA). Position 199 (Asp-199) interacts with 5-phospho-alpha-D-ribose 1-diphosphate.

This sequence belongs to the UPRTase family. Requires Mg(2+) as cofactor.

The enzyme catalyses UMP + diphosphate = 5-phospho-alpha-D-ribose 1-diphosphate + uracil. It participates in pyrimidine metabolism; UMP biosynthesis via salvage pathway; UMP from uracil: step 1/1. With respect to regulation, allosterically activated by GTP. Its function is as follows. Catalyzes the conversion of uracil and 5-phospho-alpha-D-ribose 1-diphosphate (PRPP) to UMP and diphosphate. This chain is Uracil phosphoribosyltransferase, found in Pectobacterium carotovorum subsp. carotovorum (strain PC1).